Here is a 382-residue protein sequence, read N- to C-terminus: uncharacterized protein (382 aa).

12 helical membrane-spanning segments follow: residues Gly-14–Ala-34, Val-45–Ile-65, Phe-79–Ala-99, Phe-102–Ser-122, Leu-131–Ser-151, Leu-157–Phe-177, Leu-204–Pro-224, Ala-235–Ile-255, Val-270–Pro-290, Ala-291–Cys-311, Ala-325–Met-345, and Phe-348–Leu-368.

This sequence belongs to the major facilitator superfamily. YcaD (TC 2.A.1.26) family.

It localises to the cell inner membrane. This is an uncharacterized protein from Escherichia coli (strain K12 / MC4100 / BW2952).